Reading from the N-terminus, the 376-residue chain is cAMP-dependent protein kinase type I regulatory subunit (376 aa).

Positions 1 to 131 (MSYMMAKTLE…ALSKAIAKNV (131 aa)) are dimerization and phosphorylation. The disordered stretch occupies residues 72-93 (PDDCEDLSPMPQTAAPPVRRRG). Positions 91–95 (RRGGI) match the Pseudophosphorylation motif motif. Position 96 is a phosphoserine (Ser-96). 3',5'-cyclic AMP-binding positions include 132-247 (LFAH…FLSR), Glu-197, Arg-206, 250-371 (ILES…YNSF), Glu-321, and Arg-330.

Belongs to the cAMP-dependent kinase regulatory chain family. As to quaternary structure, tetramer, composed of 2 regulatory (R) and 2 catalytic (C) subunits. In the presence of cAMP it dissociates into 2 active monomeric C subunits and an R dimer. In terms of processing, the pseudophosphorylation site binds to the substrate-binding region of the catalytic chain but is not phosphorylated. The physiological significance of phosphorylations by other kinases is unclear.

The protein is cAMP-dependent protein kinase type I regulatory subunit (Pka-R1) of Drosophila melanogaster (Fruit fly).